Here is a 48-residue protein sequence, read N- to C-terminus: Large ribosomal subunit protein bL33A (48 aa).

This sequence belongs to the bacterial ribosomal protein bL33 family.

This is Large ribosomal subunit protein bL33A from Limosilactobacillus fermentum (strain NBRC 3956 / LMG 18251) (Lactobacillus fermentum).